The sequence spans 342 residues: tRNA N6-adenosine threonylcarbamoyltransferase (342 aa).

2 residues coordinate Fe cation: His-111 and His-115. Substrate contacts are provided by residues Leu-134–Gly-138, Asp-167, Gly-180, and Asn-276. Asp-304 is a Fe cation binding site.

This sequence belongs to the KAE1 / TsaD family. It depends on Fe(2+) as a cofactor.

It is found in the cytoplasm. The enzyme catalyses L-threonylcarbamoyladenylate + adenosine(37) in tRNA = N(6)-L-threonylcarbamoyladenosine(37) in tRNA + AMP + H(+). Functionally, required for the formation of a threonylcarbamoyl group on adenosine at position 37 (t(6)A37) in tRNAs that read codons beginning with adenine. Is involved in the transfer of the threonylcarbamoyl moiety of threonylcarbamoyl-AMP (TC-AMP) to the N6 group of A37, together with TsaE and TsaB. TsaD likely plays a direct catalytic role in this reaction. The protein is tRNA N6-adenosine threonylcarbamoyltransferase of Helicobacter acinonychis (strain Sheeba).